A 725-amino-acid polypeptide reads, in one-letter code: IML2-like protein SCY_3392 (725 aa).

Thr-196 is subject to Phosphothreonine. Phosphoserine is present on residues Ser-246, Ser-377, and Ser-380.

Belongs to the IML2 family.

It is found in the cytoplasm. The protein resides in the nucleus. Its function is as follows. May be involved in mitochondrial DNA stability. The protein is IML2-like protein SCY_3392 of Saccharomyces cerevisiae (strain YJM789) (Baker's yeast).